Reading from the N-terminus, the 241-residue chain is RAD9, HUS1, RAD1-interacting nuclear orphan protein 1 (241 aa).

Residues 1–10 (MPPRKKRRQA) are compositionally biased toward basic residues. The disordered stretch occupies residues 1–27 (MPPRKKRRQAAQKPQLLFHQQPLEAPK). Positions 56 to 62 (SWVSPQF) match the RAD1-binding motif motif. 2 disordered regions span residues 68 to 134 (SWFP…PLVP) and 157 to 204 (IPPD…LVTD). Residues 72–87 (GKRKHHHRDHARRSSR) are compositionally biased toward basic residues. The span at 100 to 110 (ETPQSSASSAT) shows a compositional bias: polar residues. Positions 129-136 (GRPLVPML) match the D-box motif. Positions 177–181 (LRENS) match the KEN box motif. Over residues 181 to 193 (SLPSCSLHTSTPK) the composition is skewed to polar residues.

In terms of assembly, interacts (when phosphorylated by PLK1) with POLQ; promoting POLQ recruitment to DNA damage sites. Interacts with RAD1; interaction is direct and promotes association with the 9-1-1 (RAD9-RAD1-HUS1) complex. Interacts with RAD18. Interacts with TOPBP1. Interacts with UBE2N. Phosphorylated by PLK1, promoting interaction with polymerase theta (POLQ). Post-translationally, ubiquitinated and degraded by the APC/C complex upon mitotic exit.

It localises to the nucleus. The protein resides in the chromosome. Functionally, involved in microhomology-mediated end-joining (MMEJ) DNA repair by promoting recruitment of polymerase theta (POLQ) to DNA damage sites during mitosis. MMEJ is an alternative non-homologous end-joining (NHEJ) machinery that takes place during mitosis to repair double-strand breaks in DNA that originate in S-phase. Accumulates in M-phase; following phosphorylation by PLK1, interacts with POLQ, enabling its recruitment to double-strand breaks for subsequent repair. Also involved in the DNA damage response (DDR) signaling in response to genotoxic stresses such as ionizing radiation (IR) during the S phase. Recruited to sites of DNA damage through interaction with the 9-1-1 cell-cycle checkpoint response complex and TOPBP1 in a ATR-dependent manner. Required for the progression of the G1 to S phase transition. Plays a role in the stimulation of CHEK1 phosphorylation. This is RAD9, HUS1, RAD1-interacting nuclear orphan protein 1 (RHNO1) from Bos taurus (Bovine).